The primary structure comprises 315 residues: Thioredoxin reductase (315 aa).

45–52 (EGNTPGGK) is an FAD binding site. Cysteine 145 and cysteine 148 are joined by a disulfide. Position 288–297 (288–297 (DCRSKSFRQI)) interacts with FAD.

The protein belongs to the class-II pyridine nucleotide-disulfide oxidoreductase family. Homodimer. FAD serves as cofactor.

It is found in the cytoplasm. The enzyme catalyses [thioredoxin]-dithiol + NADP(+) = [thioredoxin]-disulfide + NADPH + H(+). This is Thioredoxin reductase (trxB) from Mycoplasma genitalium (strain ATCC 33530 / DSM 19775 / NCTC 10195 / G37) (Mycoplasmoides genitalium).